A 391-amino-acid chain; its full sequence is 1-deoxy-D-xylulose 5-phosphate reductoisomerase (391 aa).

Residues Thr11, Gly12, Ser13, Ile14, and Asn126 each contribute to the NADPH site. Residue Lys127 participates in 1-deoxy-D-xylulose 5-phosphate binding. An NADPH-binding site is contributed by Glu128. Position 152 (Asp152) interacts with Mn(2+). Ser153, Glu154, Ser176, and His199 together coordinate 1-deoxy-D-xylulose 5-phosphate. Glu154 is a Mn(2+) binding site. An NADPH-binding site is contributed by Gly205. Ser212, Asn217, Lys218, and Glu221 together coordinate 1-deoxy-D-xylulose 5-phosphate. Glu221 is a binding site for Mn(2+).

It belongs to the DXR family. The cofactor is Mg(2+). Mn(2+) is required as a cofactor.

It catalyses the reaction 2-C-methyl-D-erythritol 4-phosphate + NADP(+) = 1-deoxy-D-xylulose 5-phosphate + NADPH + H(+). It functions in the pathway isoprenoid biosynthesis; isopentenyl diphosphate biosynthesis via DXP pathway; isopentenyl diphosphate from 1-deoxy-D-xylulose 5-phosphate: step 1/6. Its function is as follows. Catalyzes the NADPH-dependent rearrangement and reduction of 1-deoxy-D-xylulose-5-phosphate (DXP) to 2-C-methyl-D-erythritol 4-phosphate (MEP). This chain is 1-deoxy-D-xylulose 5-phosphate reductoisomerase, found in Acidithiobacillus ferrooxidans (strain ATCC 53993 / BNL-5-31) (Leptospirillum ferrooxidans (ATCC 53993)).